The primary structure comprises 398 residues: Acetyl-CoA acetyltransferase (398 aa).

N-acetylserine is present on Ser2. Catalysis depends on Cys91, which acts as the Acyl-thioester intermediate. CoA-binding residues include Tyr186 and Lys231. K(+) is bound at residue Tyr186. K(+)-binding residues include Ala248, Ala249, and Ala251. Ser252 lines the CoA pocket. Val350 serves as a coordination point for K(+). Catalysis depends on proton acceptor residues His354 and Cys384.

Belongs to the thiolase-like superfamily. Thiolase family. In terms of assembly, homotetramer.

It localises to the cytoplasm. The protein resides in the cytosol. It carries out the reaction 2 acetyl-CoA = acetoacetyl-CoA + CoA. It functions in the pathway metabolic intermediate biosynthesis; (R)-mevalonate biosynthesis; (R)-mevalonate from acetyl-CoA: step 1/3. Functionally, acetyl-CoA acetyltransferase; part of the first module of ergosterol biosynthesis pathway that includes the early steps of the pathway, conserved across all eukaryotes, and which results in the formation of mevalonate from acetyl-coenzyme A (acetyl-CoA). ERG10 catalyzes the formation of acetoacetyl-CoA from acetyl-CoA. The first module starts with the action of the cytosolic acetyl-CoA acetyltransferase ERG10 that catalyzes the formation of acetoacetyl-CoA. The hydroxymethylglutaryl-CoA synthase ERG13 then condenses acetyl-CoA with acetoacetyl-CoA to form HMG-CoA. The rate-limiting step of the early module is the reduction to mevalonate by the 3-hydroxy-3-methylglutaryl-coenzyme A (HMG-CoA) reductases HMG1 and HMG2 which are derived from a single ancestral HMGR gene by gene duplication. This chain is Acetyl-CoA acetyltransferase, found in Saccharomyces cerevisiae (strain ATCC 204508 / S288c) (Baker's yeast).